Consider the following 208-residue polypeptide: Ribosomal RNA small subunit methyltransferase G (208 aa).

S-adenosyl-L-methionine-binding positions include G78, F83, 101-103 (ERS), 129-130 (IE), and R142.

This sequence belongs to the methyltransferase superfamily. RNA methyltransferase RsmG family.

Its subcellular location is the cytoplasm. In terms of biological role, specifically methylates the N7 position of a guanine in 16S rRNA. In Borreliella burgdorferi (strain ATCC 35210 / DSM 4680 / CIP 102532 / B31) (Borrelia burgdorferi), this protein is Ribosomal RNA small subunit methyltransferase G.